Reading from the N-terminus, the 764-residue chain is FAST kinase domain-containing protein 5, mitochondrial (764 aa).

The N-terminal 27 residues, 1–27 (MAATLKSLKLLRYQAFCSPSAFGAVRS), are a transit peptide targeting the mitochondrion. Residues 68–94 (IPTTSSARPGLEFSKTSSSKASTLQLG) are disordered. Residues 81–93 (SKTSSSKASTLQL) are compositionally biased toward polar residues. The residue at position 95 (Ser-95) is a Phosphoserine. Lys-507 carries the N6-acetyllysine modification. One can recognise an RAP domain in the interval 697 to 757 (LAIQFTNRNQ…RLEKLAFLHE (61 aa)).

This sequence belongs to the FAST kinase family. As to quaternary structure, found in a complex with GRSF1, DDX28, DHX30 and FASTKD2. Associates with the 12S mitochondrial rRNA (12S mt-rRNA).

The protein resides in the mitochondrion matrix. The protein localises to the mitochondrion nucleoid. Its function is as follows. Plays an important role in the processing of non-canonical mitochondrial mRNA precursors. The polypeptide is FAST kinase domain-containing protein 5, mitochondrial (FASTKD5) (Pongo abelii (Sumatran orangutan)).